A 492-amino-acid polypeptide reads, in one-letter code: Probable cytochrome P450 310a1 (492 aa).

Cys428 is a binding site for heme.

Belongs to the cytochrome P450 family. The cofactor is heme.

The protein localises to the endoplasmic reticulum membrane. It is found in the microsome membrane. In terms of biological role, may be involved in the metabolism of insect hormones and in the breakdown of synthetic insecticides. This chain is Probable cytochrome P450 310a1 (Cyp310a1), found in Drosophila melanogaster (Fruit fly).